We begin with the raw amino-acid sequence, 55 residues long: UPF0391 membrane protein Sfum_0248 (55 aa).

The next 2 helical transmembrane spans lie at 4-24 (WALI…GGII) and 28-48 (AWIA…SLLS).

Belongs to the UPF0391 family.

The protein localises to the cell membrane. This is UPF0391 membrane protein Sfum_0248 from Syntrophobacter fumaroxidans (strain DSM 10017 / MPOB).